Consider the following 573-residue polypeptide: 2-isopropylmalate synthase (573 aa).

Residues 37–314 (PRWLSTDLRD…DPQIDFSDID (278 aa)) enclose the Pyruvate carboxyltransferase domain. The Mg(2+) site is built by D46, H253, H255, and N289. The regulatory domain stretch occupies residues 456–573 (NPDNPWGRIQ…VVSAVNRATR (118 aa)).

Belongs to the alpha-IPM synthase/homocitrate synthase family. LeuA type 2 subfamily. As to quaternary structure, homodimer. The cofactor is Mg(2+).

It localises to the cytoplasm. The catalysed reaction is 3-methyl-2-oxobutanoate + acetyl-CoA + H2O = (2S)-2-isopropylmalate + CoA + H(+). Its pathway is amino-acid biosynthesis; L-leucine biosynthesis; L-leucine from 3-methyl-2-oxobutanoate: step 1/4. In terms of biological role, catalyzes the condensation of the acetyl group of acetyl-CoA with 3-methyl-2-oxobutanoate (2-ketoisovalerate) to form 3-carboxy-3-hydroxy-4-methylpentanoate (2-isopropylmalate). The protein is 2-isopropylmalate synthase of Streptomyces coelicolor (strain ATCC BAA-471 / A3(2) / M145).